Reading from the N-terminus, the 210-residue chain is MQMVSILLLALAVSLDSFSVGFTYGLRKMKIPFKAILVIACCSGAVMFISMLIGSFLTKFFPVYVTEKLGGLILVGIGAWVLYQFFKPAKDKEYLLHEKTLLNLEVRSLGIVIHILRKPMSADIDKSGVINGIEAVLLGFALSIDAFGAGIGAAILGFSPIVMSIAVAIMSSLFVSIGINAGHFLSKWKWIDKMAFLPGLLLITIGLWKL.

The next 6 helical transmembrane spans lie at 6–26 (ILLL…TYGL), 36–56 (ILVI…IGSF), 69–89 (LGGL…FKPA), 129–149 (VING…AFGA), 162–184 (VMSI…AGHF), and 190–210 (WIDK…LWKL).

Its subcellular location is the cell membrane. This Bacillus subtilis (strain 168) protein is Probable sporulation protein YtaF (ytaF).